The primary structure comprises 194 residues: MSFAEKITGLLARPNQQDPIGPEQPWYLKYGSRLLGIVAAFFAILFGLWNVFSIITLSVSCLVAGIIQMVAGFVVMLLEALCCFVCFEQVNVIADKVDSKPLYFRAGLYIAMAIPPIILCFGLASLFGSGLIFGTGVVYGMMALGKKASAEDMRAAAQQTFGGNTPAQTNDRAGIVNNAQPFSFTGAVGTDSNV.

Helical transmembrane passes span 35 to 55 (LGIVAAFFAILFGLWNVFSII), 66 to 88 (IIQMVAGFVVMLLEALCCFVCFE), and 107 to 127 (GLYIAMAIPPIILCFGLASLF).

Belongs to the calcium channel flower family. Homomultimer. Associates with the dally/ magu complex.

The protein resides in the cell membrane. It localises to the cytoplasmic vesicle. It is found in the secretory vesicle. The protein localises to the synaptic vesicle membrane. Its subcellular location is the presynaptic cell membrane. The protein resides in the endosome. With respect to regulation, channel activity is inhibited by La(3+), which reduces Ca(2+) influx and thus inhibits it's function in promoting activity-dependent bulk endocytosis (ADBE) in response to high stimuli. In terms of biological role, transmembrane protein which mediates synaptic endocytosis, fitness-based cell culling, neuronal culling, morphogen gradient scaling, and calcium transport. Regulates synaptic endocytosis and hence couples exo- with endocytosis. Controls two major modes of synaptic vesicle (SV) endocytosis in the synaptic boutons of neuromuscular junctions (NMJs); Ca(2+) channel-independent Clathrin-mediated endocytosis (CME) in response to mild stimulation, and Ca(2+) channel-dependent activity-dependent bulk endocytosis (ADBE) in response to strong stimulation. Functions in ADBE and subsequent SV reformation from bulk endosomes by initiating Ca(2+) channel-dependent phosphatidylinositol 4,5-bisphosphate (PtdIns(4,5)P2) compartmentalization in synaptic boutons. There it acts at the periactive zone to provide the low Ca(2+) levels required to initiate Calcineurin activation and upregulate PtdIns(4,5)P2. Conversely PtdIns(4,5)P2 enhances fwe Ca(2+) channel-activity, establishing a positive feedback loop that induces PtdIns(4,5)P2 microdomain at the periactive zone. These microdomains trigger bulk membrane invagination (i.e. ADBE) by triggering actin polymerization while also promoting localization of fwe to bulk endosomes, thereby removing the ADBE trigger to reduce endocytosis and prevent excess membrane uptake. PtdIns(4,5)P2 then promotes SV reformation from the bulk endosomes, to coordinate ADBE and subsequent SV reformation. Different combinations of the flower isoforms at the cell membrane are also required for the identification and elimination of suboptimal or supernumerary cells during development, regeneration, and adulthood. Required for the recognition and elimination of unfit cells in the developing wing during cell competition. In the developing pupal retina, mediates the elimination of unwanted postmitotic neurons, including supernumerary photoreceptor neurons that form at the periphery of the retina and are contained within incomplete ommatidia units. Also required for efficient elimination and replacement of old neurons by newly generated neurons during regeneration in the adult brain following mechanical injury. Downstream of the flower fitness fingerprints, cells identified as unwanted or unfit are eliminated via apoptosis through the expression of ahuizotl (azot). However, the cells marked for elimination by the flower isoforms only undergo apoptosis if additional thresholds are met; (1) their neighboring fit/healthy cells express different levels of the fwe isoforms, and (2) the levels of the protective signal SPARC expressed by the loser or unwanted cells are unable to inhibit caspase activation. These additional thresholds for flower-mediated apoptosis, allows useful cells to recover from transient and limited stress before they are unnecessarily eliminated. Functions with dally and magu in a mechanism of scaling, which utilises apoptosis to ensure that the dpp morphogen gradient, which mediates organ growth, remains proportional to the size of the growing wing. In this mechanism, fwe represses dally- and Magu-dependent activity in expanding the gradient, and dally/Magu inhibits fwe-dependent apoptosis to keep cell death rate low. When the levels of these different proteins are optimally regulated the gradient correctly scales with organ growth but when this fails, fwe-mediated apoptosis is activated to trim the developing tissue to match the correct size of the gradient. This Drosophila sechellia (Fruit fly) protein is Calcium channel flower.